Here is a 388-residue protein sequence, read N- to C-terminus: MNIHEYQGKEILRKYNVPVPRGIPAFSVDEALKAAETLGGPVWVVKAQIHAGGRGKGGGVKVAKSIDDVKTYASNILGMQLVTHQTGPEGKKVNRLLIEEGADIKKELYVSLVVDRVSQKVALMASSEGGMDIEEVAAHSPEKIHTLIIEPSVGLTDAEADDIARKIGVPDTSVAQARQALQGLYKAFYETDASLAEINPLILTGDGKVIALDAKFNFDSNALFRHPEIVAYRDLDEEDANEIEASKFDLAYISLDGNIGCLVNGAGLAMATMDTIKLFGGEPANFLDVGGGATTEKVTEAFKLMLSNKNVQAILVNIFGGIMRCDVIAEGVISASKAVHLTVPLVVRMKGTNEDLGKKMLADSGLPIISADTMEEAAQKVVAAAAGK.

Residues 9–244 form the ATP-grasp domain; the sequence is KEILRKYNVP…LDEEDANEIE (236 aa). Residues K46, 53–55, E99, A102, and E107 contribute to the ATP site; that span reads GRG. Residues N199 and D213 each coordinate Mg(2+). Residues N264 and 321-323 each bind substrate; that span reads GIM.

The protein belongs to the succinate/malate CoA ligase beta subunit family. In terms of assembly, heterotetramer of two alpha and two beta subunits. Mg(2+) is required as a cofactor.

The catalysed reaction is succinate + ATP + CoA = succinyl-CoA + ADP + phosphate. It carries out the reaction GTP + succinate + CoA = succinyl-CoA + GDP + phosphate. Its pathway is carbohydrate metabolism; tricarboxylic acid cycle; succinate from succinyl-CoA (ligase route): step 1/1. Its function is as follows. Succinyl-CoA synthetase functions in the citric acid cycle (TCA), coupling the hydrolysis of succinyl-CoA to the synthesis of either ATP or GTP and thus represents the only step of substrate-level phosphorylation in the TCA. The beta subunit provides nucleotide specificity of the enzyme and binds the substrate succinate, while the binding sites for coenzyme A and phosphate are found in the alpha subunit. This chain is Succinate--CoA ligase [ADP-forming] subunit beta, found in Cupriavidus necator (strain ATCC 17699 / DSM 428 / KCTC 22496 / NCIMB 10442 / H16 / Stanier 337) (Ralstonia eutropha).